Here is a 674-residue protein sequence, read N- to C-terminus: Xaa-Pro aminopeptidase 2 (674 aa).

An N-terminal signal peptide occupies residues 1-22 (MAQAYWQCYPWLVLLCACAWSY). N-linked (GlcNAc...) asparagine glycosylation occurs at Asn-65. Position 116 (Arg-116) interacts with substrate. 3 N-linked (GlcNAc...) asparagine glycosylation sites follow: Asn-270, Asn-278, and Asn-293. His-430 contributes to the substrate binding site. Zn(2+) is bound by residues Asp-450, Asp-461, and His-524. Substrate-binding residues include His-524, His-533, and Glu-555. Zn(2+) contacts are provided by Glu-555 and Glu-569. A lipid anchor (GPI-anchor amidated alanine) is attached at Ala-650. A propeptide spans 651–674 (RAPHIISWTSLWVASALAILSWSS) (removed in mature form).

This sequence belongs to the peptidase M24B family. Homotrimer. Requires Zn(2+) as cofactor. In terms of processing, N-glycosylated. In terms of tissue distribution, strongly expressed in small intestine, heart and lung. Also detected in testis, skeletal muscle, spleen, liver, kidney, brain, uterus, eye, lymph node, thymus, stomach, prostate and bone marrow.

It localises to the cell membrane. It carries out the reaction Release of any N-terminal amino acid, including proline, that is linked to proline, even from a dipeptide or tripeptide.. Membrane-bound metalloprotease which catalyzes the removal of a penultimate prolyl residue from the N-termini of peptides, such as Arg-Pro-Pro. May play a role in the metabolism of the vasodilator bradykinin. The polypeptide is Xaa-Pro aminopeptidase 2 (Mus musculus (Mouse)).